An 852-amino-acid polypeptide reads, in one-letter code: Homeobox-leucine zipper protein ATHB-14 (852 aa).

The tract at residues 1–25 (MMMVHSMSRDMMNRESPDKGLDSGK) is disordered. Over residues 7–22 (MSRDMMNRESPDKGLD) the composition is skewed to basic and acidic residues. Residues 22 to 85 (DSGKYVRYTP…NRRCREKQRK (64 aa)) constitute a DNA-binding region (homeobox). The stretch at 80–122 (REKQRKEAARLQTVNRKLNAMNKLLMEENDRLQKQVSNLVYEN) forms a coiled coil. The tract at residues 80-130 (REKQRKEAARLQTVNRKLNAMNKLLMEENDRLQKQVSNLVYENGHMKHQLH) is ZIP domain. Residues 130–148 (HTASGTTTDNSCESVVVSG) are compositionally biased toward polar residues. Residues 130–166 (HTASGTTTDNSCESVVVSGQQHQQQNPNPQHQQRDAN) are disordered. Residues 149-160 (QQHQQQNPNPQH) show a composition bias toward low complexity. An START domain is found at 164–392 (DANNPAGLLS…IAQETSGEVQ (229 aa)).

Belongs to the HD-ZIP homeobox family. Class III subfamily. In terms of assembly, homodimer. Heterodimer with ZPR3. Interacts with ESR1 and ESR2. Interacts with ZPR3. Expressed in the center of the meristem and on the adaxial side of the leaves.

It localises to the nucleus. Its activity is regulated as follows. Inhibited by ZPR3. Its function is as follows. Probable transcription factor involved in the determination of adaxial-abaxial polarity in ovule primordium. Specifies adaxial leaf fates. This chain is Homeobox-leucine zipper protein ATHB-14 (ATHB-14), found in Arabidopsis thaliana (Mouse-ear cress).